We begin with the raw amino-acid sequence, 433 residues long: MSNRFDSKPKCRCVAKIDDNYENNCQSKYISKCEIPRNICQRKNIDFFYDFRLKYSDADFDYVFGNDGVVTQNFTGLTVNSVPFTQTVPIGNEHPKWLKFYKDAFPLYNDREVIFETEMSGVQVIDGNSIPEKMKPRIRNVDDDLRLASGALNVIDPNTWMVFDFFVTNTAIYAFYERLPFGKTSSTPSNTTSQFGNKSFHDKFTHNGSIHNGSIHNGSIHNGSHCNPNPDVPTDLGNYAAFSNAIWVARRSADDPLSQFSKLAIGIHKGKGLVTWYIDDIPVFTWDRIGYRMHDEYRMVDHGGIEGIVSPDSMRLGFGTFSLFDMNLPNDYDRGYVDPVVVLPDGPHREIARSALIQLDFAANYRETFPDPYTGLERPLADPAITFAYTLGETPDDNRAIKLFGQGAIIKLKYLRVYTRSPNAKPEFSRVNH.

Its subcellular location is the virion. This is an uncharacterized protein from Acanthamoeba polyphaga (Amoeba).